A 124-amino-acid polypeptide reads, in one-letter code: Large ribosomal subunit protein bL12 (124 aa).

The protein belongs to the bacterial ribosomal protein bL12 family. In terms of assembly, homodimer. Part of the ribosomal stalk of the 50S ribosomal subunit. Forms a multimeric L10(L12)X complex, where L10 forms an elongated spine to which 2 to 4 L12 dimers bind in a sequential fashion. Binds GTP-bound translation factors.

Functionally, forms part of the ribosomal stalk which helps the ribosome interact with GTP-bound translation factors. Is thus essential for accurate translation. The polypeptide is Large ribosomal subunit protein bL12 (Cupriavidus necator (strain ATCC 17699 / DSM 428 / KCTC 22496 / NCIMB 10442 / H16 / Stanier 337) (Ralstonia eutropha)).